We begin with the raw amino-acid sequence, 396 residues long: Non-homologous end joining protein Ku (396 aa).

Residues 9–189 (ISFGLVSIPV…DVAVRPQELS (181 aa)) form the Ku domain. Residues 278-288 (DGDAGPAAAGV) show a composition bias toward low complexity. Positions 278 to 396 (DGDAGPAAAG…SKTPPTRRSA (119 aa)) are disordered. Positions 294–312 (DDKASDDKASDDKASDGRR) are enriched in basic and acidic residues. Residues 315–336 (RTSSVKGASSAPGTRSTARKTP) are compositionally biased toward polar residues. The span at 337 to 396 (SSTRSTAKTNAATKTPPAKTSAAKASAAKTSAAKATSSRTAPKTAPRTPTSKTPPTRRSA) shows a compositional bias: low complexity.

It belongs to the prokaryotic Ku family. In terms of assembly, homodimer. Interacts with LigD.

With LigD forms a non-homologous end joining (NHEJ) DNA repair enzyme, which repairs dsDNA breaks with reduced fidelity. Binds linear dsDNA with 5'- and 3'- overhangs but not closed circular dsDNA nor ssDNA. Recruits and stimulates the ligase activity of LigD. This Frankia casuarinae (strain DSM 45818 / CECT 9043 / HFP020203 / CcI3) protein is Non-homologous end joining protein Ku.